Consider the following 219-residue polypeptide: Thiopurine S-methyltransferase (219 aa).

4 residues coordinate S-adenosyl-L-methionine: Trp10, Leu45, Glu66, and Arg123.

It belongs to the class I-like SAM-binding methyltransferase superfamily. TPMT family.

It is found in the cytoplasm. It carries out the reaction S-adenosyl-L-methionine + a thiopurine = S-adenosyl-L-homocysteine + a thiopurine S-methylether.. The polypeptide is Thiopurine S-methyltransferase (Bordetella bronchiseptica (strain ATCC BAA-588 / NCTC 13252 / RB50) (Alcaligenes bronchisepticus)).